The sequence spans 602 residues: Probable HECT-type ubiquitin ligase-interacting protein creD (602 aa).

Disordered regions lie at residues 375-398 and 457-499; these read EVDP…GALS and TADY…MATP. Over residues 463-475 the composition is skewed to low complexity; the sequence is PSSGSNSHSPASP. Residues 477 to 492 are compositionally biased toward basic and acidic residues; sequence LSRRPSDEGYRDHDHI.

The protein belongs to the arrestin family. In terms of assembly, interacts with hulA.

Functionally, component of the regulatory network controlling carbon source utilization through ubiquitination and deubiquitination involving creA, creB, creC, creD and acrB. May be involved in signaling by recognizing appropriately phosphorylated substrates via its arrestin domains and then recruit a HECT-type ubiquitin ligase such as hulA, leading to ubiquitination of the substrate, providing a link between ubiquitination and phosphorylation in protein regulation and stability. The polypeptide is Probable HECT-type ubiquitin ligase-interacting protein creD (creD) (Aspergillus clavatus (strain ATCC 1007 / CBS 513.65 / DSM 816 / NCTC 3887 / NRRL 1 / QM 1276 / 107)).